A 326-amino-acid polypeptide reads, in one-letter code: MIKIAVDMHGGDNAPDIVLDGIEMFLKEFNDVEIHLYGDEKENRINHPRLTMHHTTDVITMDDEPVRAIRRKKDASMVRAAESVKLKETDAVVSAGNTGALMAAGLFVIGRIKGIERPALALTLPTINDEGFMLLDMGANADAKPEHLVQYAKMASIYAHKNRGISNPSVGLANIGTEDKKGNQLARDTFNLLKEETSINFIGNVESKALLNYAADIVVTDGFTGNMILKTLEGTANNIFKMLKSTLLASTKTKIAAGLIKKDLMQLKNKMDYSEYGGAILFGVDGIVIKAHGSSDKKAFFNALKQVRQSAREDVISLLKQEVTHE.

It belongs to the PlsX family. As to quaternary structure, homodimer. Probably interacts with PlsY.

It localises to the cytoplasm. It catalyses the reaction a fatty acyl-[ACP] + phosphate = an acyl phosphate + holo-[ACP]. Its pathway is lipid metabolism; phospholipid metabolism. In terms of biological role, catalyzes the reversible formation of acyl-phosphate (acyl-PO(4)) from acyl-[acyl-carrier-protein] (acyl-ACP). This enzyme utilizes acyl-ACP as fatty acyl donor, but not acyl-CoA. This chain is Phosphate acyltransferase, found in Macrococcus caseolyticus (strain JCSC5402) (Macrococcoides caseolyticum).